A 31-amino-acid chain; its full sequence is Spectrin beta chain, non-erythrocytic 1 (31 aa).

Spectrin repeat units lie at residues 1-10 (VLLLSQDYGK), 11-19 (YKEVAELTR), and 20-31 (TQILAASYELHK). Tyrosine 27 carries the phosphotyrosine modification.

The protein belongs to the spectrin family. Interacts with ANK2. Interacts with CPNE4 (via VWFA domain). Like erythrocyte spectrin, the spectrin-like proteins are capable to form dimers which can further associate to tetramers. Associates with the gamma-tubulin complex in brain, but not in kidney, liver, sperm, or uterus. Interacts with CAMSAP1. Can form heterodimers with SPTAN1.

It localises to the cytoplasm. Its subcellular location is the cytoskeleton. It is found in the myofibril. The protein resides in the sarcomere. The protein localises to the m line. It localises to the cytosol. Its subcellular location is the cell membrane. Fodrin, which seems to be involved in secretion, interacts with calmodulin in a calcium-dependent manner and is thus candidate for the calcium-dependent movement of the cytoskeleton at the membrane. Plays a critical role in central nervous system development and function. The protein is Spectrin beta chain, non-erythrocytic 1 (SPTBN1) of Capra hircus (Goat).